A 300-amino-acid chain; its full sequence is Epimerase family protein SAB0724c (300 aa).

This sequence belongs to the NAD(P)-dependent epimerase/dehydratase family. SDR39U1 subfamily.

The protein is Epimerase family protein SAB0724c of Staphylococcus aureus (strain bovine RF122 / ET3-1).